The chain runs to 103 residues: Large ribosomal subunit protein bL21 (103 aa).

It belongs to the bacterial ribosomal protein bL21 family. In terms of assembly, part of the 50S ribosomal subunit. Contacts protein L20.

Functionally, this protein binds to 23S rRNA in the presence of protein L20. The protein is Large ribosomal subunit protein bL21 of Clostridium beijerinckii (strain ATCC 51743 / NCIMB 8052) (Clostridium acetobutylicum).